Consider the following 418-residue polypeptide: 3-isopropylmalate dehydratase large subunit (418 aa).

[4Fe-4S] cluster-binding residues include Cys-297, Cys-357, and Cys-360.

Belongs to the aconitase/IPM isomerase family. LeuC type 2 subfamily. In terms of assembly, heterodimer of LeuC and LeuD. [4Fe-4S] cluster is required as a cofactor.

It catalyses the reaction (2R,3S)-3-isopropylmalate = (2S)-2-isopropylmalate. It functions in the pathway amino-acid biosynthesis; L-leucine biosynthesis; L-leucine from 3-methyl-2-oxobutanoate: step 2/4. In terms of biological role, catalyzes the isomerization between 2-isopropylmalate and 3-isopropylmalate, via the formation of 2-isopropylmaleate. This chain is 3-isopropylmalate dehydratase large subunit, found in Elusimicrobium minutum (strain Pei191).